Consider the following 240-residue polypeptide: Ubiquinone biosynthesis O-methyltransferase (240 aa).

4 residues coordinate S-adenosyl-L-methionine: Arg-44, Gly-64, Asp-85, and Met-129.

Belongs to the methyltransferase superfamily. UbiG/COQ3 family.

The enzyme catalyses a 3-demethylubiquinol + S-adenosyl-L-methionine = a ubiquinol + S-adenosyl-L-homocysteine + H(+). It carries out the reaction a 3-(all-trans-polyprenyl)benzene-1,2-diol + S-adenosyl-L-methionine = a 2-methoxy-6-(all-trans-polyprenyl)phenol + S-adenosyl-L-homocysteine + H(+). It participates in cofactor biosynthesis; ubiquinone biosynthesis. Functionally, O-methyltransferase that catalyzes the 2 O-methylation steps in the ubiquinone biosynthetic pathway. The chain is Ubiquinone biosynthesis O-methyltransferase from Escherichia coli (strain ATCC 8739 / DSM 1576 / NBRC 3972 / NCIMB 8545 / WDCM 00012 / Crooks).